The sequence spans 580 residues: YTH domain-containing family protein 2 (580 aa).

The interval 1–45 (MSASSLLEQRPKGQGNKVQNGSVHQKDGLNDDDFEPYLSPQARPN) is disordered. Ser-2 is subject to N-acetylserine. A phosphoserine mark is found at Ser-2, Ser-4, Ser-5, Ser-22, Ser-39, and Ser-196. A localization to mRNA processing bodies (P-bodies) region spans residues 2-385 (SASSLLEQRP…QAGSGSTPSE (384 aa)). The interval 247–388 (AKQQPKLKTK…SGSTPSEPHP (142 aa)) is disordered. Residues 291–317 (ALVQNIGQQPTQGSPQPVGQQANNSPP) show a composition bias toward polar residues. The segment covering 338–350 (AQLSVQQQAAQPT) has biased composition (low complexity). Position 360 is a phosphoserine (Ser-360). Residues 360–372 (SGFGHNGVDGNGV) are compositionally biased toward gly residues. A compositionally biased stretch (polar residues) spans 373 to 384 (GQTQAGSGSTPS). An interaction with m6A-containing mRNAs region spans residues 386-580 (PHPVLEKLRS…VKKERQGRGK (195 aa)). The residue at position 395 (Ser-395) is a Phosphoserine. In terms of domain architecture, YTH spans 411-545 (GRVFIIKSYS…EKAKQVLKII (135 aa)). Residues 417-419 (KSY), Asp-423, 433-434 (WC), Asn-463, Trp-487, and Trp-492 contribute to the RNA site.

This sequence belongs to the YTHDF family. YTHDF2 subfamily. In terms of assembly, interacts with CNOT1; interaction is direct and promotes recruitment of the CCR4-NOT complex. Interacts with YTHDF3. Interacts with RIDA/HRSP12; interaction leads to recruitment of the ribonuclease P/MRP complex. Post-translationally, ubiquitinated by the SCF(SKP2) complex, leading to its degradation.

The protein localises to the cytoplasm. The protein resides in the cytosol. Its subcellular location is the P-body. It is found in the stress granule. It localises to the nucleus. In terms of biological role, specifically recognizes and binds N6-methyladenosine (m6A)-containing RNAs, and regulates their stability. M6A is a modification present at internal sites of mRNAs and some non-coding RNAs and plays a role in mRNA stability and processing. Acts as a regulator of mRNA stability by promoting degradation of m6A-containing mRNAs via interaction with the CCR4-NOT and ribonuclease P/MRP complexes, depending on the context. The YTHDF paralogs (YTHDF1, YTHDF2 and YTHDF3) share m6A-containing mRNAs targets and act redundantly to mediate mRNA degradation and cellular differentiation. M6A-containing mRNAs containing a binding site for RIDA/HRSP12 (5'-GGUUC-3') are preferentially degraded by endoribonucleolytic cleavage: cooperative binding of RIDA/HRSP12 and YTHDF2 to transcripts leads to recruitment of the ribonuclease P/MRP complex. Other m6A-containing mRNAs undergo deadenylation via direct interaction between YTHDF2 and CNOT1, leading to recruitment of the CCR4-NOT and subsequent deadenylation of m6A-containing mRNAs. Required maternally to regulate oocyte maturation: probably acts by binding to m6A-containing mRNAs, thereby regulating maternal transcript dosage during oocyte maturation, which is essential for the competence of oocytes to sustain early zygotic development. Also required during spermatogenesis: regulates spermagonial adhesion by promoting degradation of m6A-containing transcripts coding for matrix metallopeptidases. Also involved in hematopoietic stem cells specification by binding to m6A-containing mRNAs, leading to promote their degradation. Also acts as a regulator of neural development by promoting m6A-dependent degradation of neural development-related mRNA targets. Inhibits neural specification of induced pluripotent stem cells by binding to methylated neural-specific mRNAs and promoting their degradation, thereby restraining neural differentiation. Regulates circadian regulation of hepatic lipid metabolism: acts by promoting m6A-dependent degradation of PPARA transcripts. Regulates the innate immune response to infection by inhibiting the type I interferon response: acts by binding to m6A-containing IFNB transcripts and promoting their degradation. May also act as a promoter of cap-independent mRNA translation following heat shock stress: upon stress, relocalizes to the nucleus and specifically binds mRNAs with some m6A methylation mark at their 5'-UTR, protecting demethylation of mRNAs by FTO, thereby promoting cap-independent mRNA translation. Regulates mitotic entry by promoting the phase-specific m6A-dependent degradation of WEE1 transcripts. Promotes formation of phase-separated membraneless compartments, such as P-bodies or stress granules, by undergoing liquid-liquid phase separation upon binding to mRNAs containing multiple m6A-modified residues: polymethylated mRNAs act as a multivalent scaffold for the binding of YTHDF proteins, juxtaposing their disordered regions and thereby leading to phase separation. The resulting mRNA-YTHDF complexes then partition into different endogenous phase-separated membraneless compartments, such as P-bodies, stress granules or neuronal RNA granules. May also recognize and bind RNAs modified by C5-methylcytosine (m5C) and act as a regulator of rRNA processing. The chain is YTH domain-containing family protein 2 from Bos taurus (Bovine).